The primary structure comprises 1958 residues: Callose synthase 7 (1958 aa).

The tract at residues 1-29 is disordered; the sequence is MASTSSGGRGEDGRPPQMQPVRSMSRKMT. At 1 to 504 the chain is on the cytoplasmic side; that stretch reads MASTSSGGRG…LYRSFDRMWM (504 aa). Residues 505–525 form a helical membrane-spanning segment; it reads FLVLSLQTMIIVAWHPSGSIL. The Extracellular portion of the chain corresponds to 526–535; the sequence is AIFTEDVFRN. Residues 536–556 traverse the membrane as a helical segment; sequence VLTIFITSAFLNLLQATLDLV. Over 557 to 569 the chain is Cytoplasmic; it reads LSFGAWKSLKFSQ. A helical transmembrane segment spans residues 570–590; that stretch reads IMRYITKFLMAAMWAIMLPIT. At 591 to 620 the chain is on the extracellular side; the sequence is YSKSVQNPTGLIKFFSSWVGSWLHRSLYDY. The chain crosses the membrane as a helical span at residues 621–641; that stretch reads AIALYVLPNILAAVFFLLPPL. At 642–673 the chain is on the cytoplasmic side; sequence RRIMERSNMRIVTLIMWWAQPKLYIGRGMHEE. The helical transmembrane segment at 674–694 threads the bilayer; sequence MFALFKYTFFWVMLLLSKLAF. The Extracellular segment spans residues 695-730; that stretch reads SYYVEILPLVNPTKLIWDMHVVNYEWHEFFPNATHN. Residues 731-751 traverse the membrane as a helical segment; it reads IGVIIAIWGPIVLVYFMDTQI. Residues 752-1496 are Cytoplasmic-facing; that stretch reads WYAIFSTLFG…FDFYRMLSFY (745 aa). The helical transmembrane segment at 1497 to 1517 threads the bilayer; it reads FTTVGFYFSSMITVLTVYVFL. Topologically, residues 1518 to 1547 are extracellular; the sequence is YGRLYLVLSGLEKNILQSASVHESNALEQA. The chain crosses the membrane as a helical span at residues 1548 to 1568; sequence LAAQSVFQLGFLMVLPMVMEI. Over 1569-1576 the chain is Cytoplasmic; sequence GLEKGFRT. A helical membrane pass occupies residues 1577–1597; the sequence is ALGDFIIMQLQLASVFFTFQL. The Extracellular portion of the chain corresponds to 1598–1640; sequence GTKAHYFGRTILHGGSKYRATGRGFVVFHAKFAENYRLYSRSH. A helical transmembrane segment spans residues 1641–1661; the sequence is FVKGLELVILLVVYQVYGTSY. Residues 1662–1667 are Cytoplasmic-facing; that stretch reads RSSSTY. Residues 1668-1688 form a helical membrane-spanning segment; the sequence is MYITFSMWFLVTSWLFAPFIF. At 1689–1742 the chain is on the extracellular side; it reads NPSGFEWQKTVDDWTDWKRWMGNRGGIGIVLDKSWESWWDIEQEHLKHTNLRGR. The helical transmembrane segment at 1743–1763 threads the bilayer; the sequence is VLEILLALRFLLYQYGIVYHL. At 1764–1771 the chain is on the cytoplasmic side; that stretch reads NIARRHTT. Residues 1772 to 1792 form a helical membrane-spanning segment; the sequence is FLVYGLSWAILLSVLLVLKMV. Topologically, residues 1793–1812 are extracellular; sequence SMGRRKFGTDFQVMFRILKA. The chain crosses the membrane as a helical span at residues 1813–1833; that stretch reads LLFLGFLSVMTVLFVVCGLTI. At 1834 to 1835 the chain is on the cytoplasmic side; that stretch reads SD. Residues 1836–1856 form a helical membrane-spanning segment; that stretch reads LFASILAFLPTGWAILLIGQA. Residues 1857-1878 are Extracellular-facing; sequence LRSVFKGLGFWDSVKELGRAYE. A helical transmembrane segment spans residues 1879-1899; the sequence is YIMGLVIFTPIAVLSWFPFVS. The Cytoplasmic segment spans residues 1900 to 1958; sequence EFQTRLLFNQAFSRGLQISMILAGKKDKETPSTKYLGHTEESFGLEHDTNTFNHYYLWT.

It belongs to the glycosyltransferase 48 family.

Its subcellular location is the cell membrane. The enzyme catalyses [(1-&gt;3)-beta-D-glucosyl](n) + UDP-alpha-D-glucose = [(1-&gt;3)-beta-D-glucosyl](n+1) + UDP + H(+). Its function is as follows. Involved in callose synthesis at the forming cell plate during cytokinesis. During plant growth and development, callose is found as a transitory component of the cell plate in dividing cells, is a major component of pollen mother cell walls and pollen tubes, and is found as a structural component of plasmodesmatal canals. The protein is Callose synthase 7 (CALS7) of Arabidopsis thaliana (Mouse-ear cress).